We begin with the raw amino-acid sequence, 158 residues long: Large ribosomal subunit protein uL16 (158 aa).

Belongs to the universal ribosomal protein uL16 family. In terms of assembly, part of the 50S ribosomal subunit.

Its function is as follows. Binds 23S rRNA and is also seen to make contacts with the A and possibly P site tRNAs. In Prochlorococcus marinus (strain MIT 9303), this protein is Large ribosomal subunit protein uL16.